The sequence spans 464 residues: Cysteine--tRNA ligase 1 (464 aa).

C28 provides a ligand contact to Zn(2+). Residues 30–40 (VTIYDLCHIGH) carry the 'HIGH' region motif. Zn(2+)-binding residues include C209, H234, and E238. Positions 266–270 (KMSKS) match the 'KMSKS' region motif. K269 serves as a coordination point for ATP.

It belongs to the class-I aminoacyl-tRNA synthetase family. As to quaternary structure, monomer. Requires Zn(2+) as cofactor.

It localises to the cytoplasm. The enzyme catalyses tRNA(Cys) + L-cysteine + ATP = L-cysteinyl-tRNA(Cys) + AMP + diphosphate. In Photobacterium profundum (strain SS9), this protein is Cysteine--tRNA ligase 1.